Consider the following 212-residue polypeptide: Imidazole glycerol phosphate synthase subunit HisH (212 aa).

The Glutamine amidotransferase type-1 domain occupies 3–212 (TVAVIDYGMG…QNFAAWDGRW (210 aa)). Residue C81 is the Nucleophile of the active site. Residues H190 and E192 contribute to the active site.

As to quaternary structure, heterodimer of HisH and HisF.

The protein resides in the cytoplasm. It carries out the reaction 5-[(5-phospho-1-deoxy-D-ribulos-1-ylimino)methylamino]-1-(5-phospho-beta-D-ribosyl)imidazole-4-carboxamide + L-glutamine = D-erythro-1-(imidazol-4-yl)glycerol 3-phosphate + 5-amino-1-(5-phospho-beta-D-ribosyl)imidazole-4-carboxamide + L-glutamate + H(+). The enzyme catalyses L-glutamine + H2O = L-glutamate + NH4(+). It participates in amino-acid biosynthesis; L-histidine biosynthesis; L-histidine from 5-phospho-alpha-D-ribose 1-diphosphate: step 5/9. In terms of biological role, IGPS catalyzes the conversion of PRFAR and glutamine to IGP, AICAR and glutamate. The HisH subunit catalyzes the hydrolysis of glutamine to glutamate and ammonia as part of the synthesis of IGP and AICAR. The resulting ammonia molecule is channeled to the active site of HisF. The sequence is that of Imidazole glycerol phosphate synthase subunit HisH from Pseudomonas syringae pv. syringae (strain B728a).